We begin with the raw amino-acid sequence, 307 residues long: sn-1-specific diacylglycerol lipase ABHD11 (307 aa).

The N-terminal 34 residues, 1–34, are a transit peptide targeting the mitochondrion; it reads MLRWARAWRVPRGVLGASSPRRLAVPVTFCSSRS. At Lys79 the chain carries N6-succinyllysine. The active-site Charge relay system is Ser133. Lys196 is subject to N6-succinyllysine. Active-site charge relay system residues include Asp229 and His288.

The protein belongs to the AB hydrolase superfamily. Interacts with OGDH and DLST; this interaction maintains the functional lipoylation of the 2-oxoglutarate dehydrogenase complex. Post-translationally, phosphorylated. Expressed in white adipose tissues.

The protein resides in the mitochondrion. It is found in the mitochondrion matrix. The catalysed reaction is 1-octadecanoyl-2-(5Z,8Z,11Z,14Z-eicosatetraenoyl)-sn-glycerol + H2O = 2-(5Z,8Z,11Z,14Z-eicosatetraenoyl)-glycerol + octadecanoate + H(+). The enzyme catalyses a 1,2-diacyl-sn-glycerol + H2O = a 2-acylglycerol + a fatty acid + H(+). It catalyses the reaction a 1,3-diacyl-sn-glycerol + H2O = a 1-acyl-sn-glycerol + a fatty acid + H(+). It carries out the reaction 1-octadecanoyl-2-(9Z-octadecenoyl)-sn-glycerol + H2O = 2-(9Z-octadecenoyl)-glycerol + octadecanoate + H(+). The catalysed reaction is 1-octadecanoyl-2-(4Z,7Z,10Z,13Z,16Z,19Z-docosahexaenoyl)-sn-glycerol + H2O = 2-(4Z,7Z,10Z,13Z,16Z,19Z-docosahexaenoyl)-glycerol + octadecanoate + H(+). The enzyme catalyses 1,2-didecanoylglycerol + H2O = decanoylglycerol + decanoate + H(+). In terms of biological role, catalyzes the hydrolysis of diacylglycerol in vitro and may function as a key regulator in lipid metabolism, namely by regulating the intracellular levels of diacylglycerol. 1,2-diacyl-sn-glycerols are the preferred substrate over 1,3-diacyl-sn-glycerols. The enzyme hydrolyzes stearate in preference to palmitate from the sn-1 position of 1,2-diacyl-sn-glycerols. Maintains the functional lipoylation of the 2-oxoglutarate dehydrogenase complex (OGDHc) through its interaction with the OGDHc by preventing the formation of lipoyl adducts. In addition, is also required for the expansion and differentiation of embryonic stem cells (ESCs). This chain is sn-1-specific diacylglycerol lipase ABHD11, found in Mus musculus (Mouse).